We begin with the raw amino-acid sequence, 360 residues long: MGSSFGHLFRISTFGESHGGGVGVIVDGCPPRLAIDIEAVQAELDRRKPGQSKITTPRKEDDRVEALSGLLDGVSLGTPIAMVVRNKDQRPGDYKEMQVAFRPSHADATYQSKYGIQARSGGGRASARETIGRVAAGAIAKQMLRQLHGTEVLAWVKRIHTLEANIDPAVPTLDAVESNIVRCPDAAMAEQMIERIESIGRDGDSCGGVIECVVRRPPTGLGMPVFDKLEADLAKAVMSLPATKGFEIGSGFAGTTLLGSQHNDAFLPTSDGSLHTATNNSGGIQGGISNGEPIVLRVAFKPTATIRKEQQTINASGEATTLAAKGRHDPCVLPRAVPMVEAMVALVLADHALRQRGQCG.

Residue Arg-47 participates in NADP(+) binding. Residues 124–126 (RAS), Gly-286, 301–305 (KPTAT), and Arg-327 contribute to the FMN site.

It belongs to the chorismate synthase family. Homotetramer. Requires FMNH2 as cofactor.

It catalyses the reaction 5-O-(1-carboxyvinyl)-3-phosphoshikimate = chorismate + phosphate. The protein operates within metabolic intermediate biosynthesis; chorismate biosynthesis; chorismate from D-erythrose 4-phosphate and phosphoenolpyruvate: step 7/7. Its function is as follows. Catalyzes the anti-1,4-elimination of the C-3 phosphate and the C-6 proR hydrogen from 5-enolpyruvylshikimate-3-phosphate (EPSP) to yield chorismate, which is the branch point compound that serves as the starting substrate for the three terminal pathways of aromatic amino acid biosynthesis. This reaction introduces a second double bond into the aromatic ring system. The sequence is that of Chorismate synthase from Synechococcus sp. (strain RCC307).